The primary structure comprises 372 residues: Sesquiterpene synthase Agr9 (372 aa).

The Mg(2+) site is built by aspartate 87, asparagine 225, serine 229, and glutamate 233. The short motif at 87-91 (DEYTD) is the DDXXD motif element. (2E,6E)-farnesyl diphosphate is bound by residues arginine 314 and tyrosine 315.

Belongs to the terpene synthase family. The cofactor is Mg(2+).

It catalyses the reaction (2E,6E)-farnesyl diphosphate = gamma-muurolene + diphosphate. It carries out the reaction (2E,6E)-farnesyl diphosphate = delta-cadinene + diphosphate. Its function is as follows. Terpene cyclase that catalyzes the cyclization of farnesyl diphosphate (FPP) to various sesquiterpenes, including gamma-muurolene, beta-cadinene and delta-cadinene. The chain is Sesquiterpene synthase Agr9 from Cyclocybe aegerita (Black poplar mushroom).